The chain runs to 241 residues: tRNA pseudouridine synthase A (241 aa).

D53 acts as the Nucleophile in catalysis. Substrate is bound at residue Y110.

This sequence belongs to the tRNA pseudouridine synthase TruA family. Homodimer.

The enzyme catalyses uridine(38/39/40) in tRNA = pseudouridine(38/39/40) in tRNA. Its function is as follows. Formation of pseudouridine at positions 38, 39 and 40 in the anticodon stem and loop of transfer RNAs. This chain is tRNA pseudouridine synthase A, found in Malacoplasma penetrans (strain HF-2) (Mycoplasma penetrans).